The chain runs to 120 residues: U13-lycotoxin-Ls1a (120 aa).

Positions 1–16 (MKILFVLISILHAVYC) are cleaved as a signal peptide. The propeptide occupies 17-54 (FSSEEDVDSAYLANELEPVEDINSEQYAALEPKEEHER). Cystine bridges form between cysteine 56–cysteine 70, cysteine 63–cysteine 76, cysteine 69–cysteine 87, and cysteine 78–cysteine 85. Positions 56–95 (CADMGQDCKDDCDCCLNIATCNCWFGRYFCSCTFGDYQTC) constitute an Agouti domain.

This sequence belongs to the neurotoxin 05 (agouti) family. Post-translationally, contains 6 disulfide bonds. In terms of tissue distribution, expressed by the venom gland.

The protein localises to the secreted. This is U13-lycotoxin-Ls1a from Lycosa singoriensis (Wolf spider).